Here is a 151-residue protein sequence, read N- to C-terminus: MAVYEILKMGDPVLREKAKPVTRFNSNLGRLIDDMFDTMAAARGVGLAAPQIGIGKRVCVVEVGKRRFELVNPEIIEAEGEQCDAEGCLSIPDYTGRVKRFQRVRVKAQDRKGETFIAEGTDLLAVAFQHEIDHLDGILFVDRVENDNPEE.

Fe cation-binding residues include C88 and H130. The active site involves E131. Fe cation is bound at residue H134.

The protein belongs to the polypeptide deformylase family. Requires Fe(2+) as cofactor.

The enzyme catalyses N-terminal N-formyl-L-methionyl-[peptide] + H2O = N-terminal L-methionyl-[peptide] + formate. Its function is as follows. Removes the formyl group from the N-terminal Met of newly synthesized proteins. Requires at least a dipeptide for an efficient rate of reaction. N-terminal L-methionine is a prerequisite for activity but the enzyme has broad specificity at other positions. The protein is Peptide deformylase of Heliobacterium modesticaldum (strain ATCC 51547 / Ice1).